Here is a 194-residue protein sequence, read N- to C-terminus: Nucleoside triphosphate pyrophosphatase (194 aa).

The active-site Proton acceptor is Asp-71.

The protein belongs to the Maf family. It depends on a divalent metal cation as a cofactor.

The protein resides in the cytoplasm. The catalysed reaction is a ribonucleoside 5'-triphosphate + H2O = a ribonucleoside 5'-phosphate + diphosphate + H(+). It carries out the reaction a 2'-deoxyribonucleoside 5'-triphosphate + H2O = a 2'-deoxyribonucleoside 5'-phosphate + diphosphate + H(+). Functionally, nucleoside triphosphate pyrophosphatase. May have a dual role in cell division arrest and in preventing the incorporation of modified nucleotides into cellular nucleic acids. This chain is Nucleoside triphosphate pyrophosphatase, found in Paramagnetospirillum magneticum (strain ATCC 700264 / AMB-1) (Magnetospirillum magneticum).